A 398-amino-acid chain; its full sequence is Cystathionine gamma-lyase (398 aa).

3 residues coordinate substrate: Arg61, Tyr113, and Arg118. The residue at position 211 (Lys211) is an N6-(pyridoxal phosphate)lysine. Glu338 is a binding site for substrate.

Belongs to the trans-sulfuration enzymes family. Homotetramer. Interacts with CALM in a calcium-dependent manner. It depends on pyridoxal 5'-phosphate as a cofactor. Detected in liver and kidney, and at lower levels in small intestine (at protein level). Highly expressed in liver, kidney and lung, detected at lower levels in stomach, small intestine and adipose tissue, and hardly found in heart, bone, and thymus.

Its subcellular location is the cytoplasm. The enzyme catalyses L,L-cystathionine + H2O = 2-oxobutanoate + L-cysteine + NH4(+). It catalyses the reaction L-cysteine + H2O = hydrogen sulfide + pyruvate + NH4(+) + H(+). The catalysed reaction is L-homocysteine + H2O = 2-oxobutanoate + hydrogen sulfide + NH4(+) + H(+). It carries out the reaction L-homoserine = 2-oxobutanoate + NH4(+). The enzyme catalyses L-selenocystathionine + H2O = L-selenocysteine + 2-oxobutanoate + NH4(+). Its pathway is amino-acid biosynthesis; L-cysteine biosynthesis; L-cysteine from L-homocysteine and L-serine: step 2/2. Its activity is regulated as follows. Activated by calmodulin in the presence of calcium ions. Its function is as follows. Catalyzes the last step in the trans-sulfuration pathway from L-methionine to L-cysteine in a pyridoxal-5'-phosphate (PLP)-dependent manner, which consists on cleaving the L,L-cystathionine molecule into L-cysteine, ammonia and 2-oxobutanoate. Part of the L-cysteine derived from the trans-sulfuration pathway is utilized for biosynthesis of the ubiquitous antioxidant glutathione. Besides its role in the conversion of L-cystathionine into L-cysteine, it utilizes L-cysteine and L-homocysteine as substrates (at much lower rates than L,L-cystathionine) to produce hydrogen sulfide (H2S). In vitro, it converts two L-cysteine molecules into lanthionine and H2S, and two L-homocysteine molecules to homolanthionine and H2S, which can be particularly relevant under conditions of severe hyperhomocysteinemia. Lanthionine and homolanthionine are structural homologs of L,L-cystathionine that differ by the absence or presence of an extra methylene group, respectively. Acts as a cysteine-protein sulfhydrase by mediating sulfhydration of target proteins: sulfhydration consists of converting -SH groups into -SSH on specific cysteine residues of target proteins such as GAPDH, PTPN1 and NF-kappa-B subunit RELA, thereby regulating their function. By generating the gasotransmitter H2S, it participates in a number of physiological processes such as vasodilation, bone protection, and inflammation. Plays an essential role in myogenesis by contributing to the biogenesis of H2S in skeletal muscle tissue. Can also accept homoserine as substrate. Catalyzes the elimination of selenocystathionine (which can be derived from the diet) to yield selenocysteine, ammonia and 2-oxobutanoate. The chain is Cystathionine gamma-lyase (Cth) from Mus musculus (Mouse).